We begin with the raw amino-acid sequence, 396 residues long: Phosphoglycerate kinase (396 aa).

Substrate is bound by residues 19-21, Arg-35, 58-61, Arg-117, and Arg-150; these read DFN and HLGR. Residues Lys-201, Glu-323, and 349–352 each bind ATP; that span reads GGDT.

Belongs to the phosphoglycerate kinase family. As to quaternary structure, monomer.

Its subcellular location is the cytoplasm. The enzyme catalyses (2R)-3-phosphoglycerate + ATP = (2R)-3-phospho-glyceroyl phosphate + ADP. It participates in carbohydrate degradation; glycolysis; pyruvate from D-glyceraldehyde 3-phosphate: step 2/5. The protein is Phosphoglycerate kinase of Desulfosudis oleivorans (strain DSM 6200 / JCM 39069 / Hxd3) (Desulfococcus oleovorans).